The following is a 316-amino-acid chain: Olfactory receptor 2K2 (316 aa).

Over 1–20 the chain is Extracellular; sequence MQGENFTIWSIFFLEGFSQY. Residue Asn-5 is glycosylated (N-linked (GlcNAc...) asparagine). Residues 21 to 41 form a helical membrane-spanning segment; the sequence is PGLEVVLFVFSLVMYLTTLLG. At 42–65 the chain is on the cytoplasmic side; it reads NSTLILITILDSRLKTPMYLFLGN. The helical transmembrane segment at 66–86 threads the bilayer; that stretch reads LSFMDICYTSASVPTLLVNLL. At 87–97 the chain is on the extracellular side; sequence SSQKTIIFSGC. A disulfide bond links Cys-97 and Cys-188. A helical membrane pass occupies residues 98-118; the sequence is AVQMYLSLAMGSTECVLLAVM. Residues 119 to 143 are Cytoplasmic-facing; that stretch reads AYDRYVAICNPLRYSIIMNRCVCAR. A helical transmembrane segment spans residues 144-164; the sequence is MATVSWVTGCLTALLETSFAL. The Extracellular segment spans residues 165–199; sequence QIPLCGNLIDHFTCEILAVLKLACTSSLLMNTIML. Residues 200-220 form a helical membrane-spanning segment; that stretch reads VVSILLLPIPMLLVCISYIFI. At 221-238 the chain is on the cytoplasmic side; the sequence is LSTILRITSAEGRNKAFS. A helical membrane pass occupies residues 239–259; that stretch reads TCGAHLTVVILYYGAALSMYL. The Extracellular segment spans residues 260–270; the sequence is KPSSSNAQKID. The helical transmembrane segment at 271–291 threads the bilayer; sequence KIISLLYGVLTPMLNPIIYSL. Over 292–316 the chain is Cytoplasmic; the sequence is RNKEVKDAMKKLLGKITLHQTHEHL.

Belongs to the G-protein coupled receptor 1 family.

The protein resides in the cell membrane. In terms of biological role, odorant receptor. The polypeptide is Olfactory receptor 2K2 (OR2K2) (Homo sapiens (Human)).